A 496-amino-acid polypeptide reads, in one-letter code: Glutamyl-tRNA(Gln) amidotransferase subunit A (496 aa).

Residues Lys-75 and Ser-150 each act as charge relay system in the active site. Ser-174 acts as the Acyl-ester intermediate in catalysis.

This sequence belongs to the amidase family. GatA subfamily. Heterotrimer of A, B and C subunits.

The catalysed reaction is L-glutamyl-tRNA(Gln) + L-glutamine + ATP + H2O = L-glutaminyl-tRNA(Gln) + L-glutamate + ADP + phosphate + H(+). In terms of biological role, allows the formation of correctly charged Gln-tRNA(Gln) through the transamidation of misacylated Glu-tRNA(Gln) in organisms which lack glutaminyl-tRNA synthetase. The reaction takes place in the presence of glutamine and ATP through an activated gamma-phospho-Glu-tRNA(Gln). The polypeptide is Glutamyl-tRNA(Gln) amidotransferase subunit A (Burkholderia pseudomallei (strain 668)).